Here is a 300-residue protein sequence, read N- to C-terminus: MPLYSQIRQSEDAFSEPTYAATNELINDNENACPHCRQERSESWFLKGGRSIVYVSLTFFVVSIGLNFILAILLYSKFHASSFQTEWSAAVADTDCVRRLVAYTPALDSIEYFATNLRDAYRSNDQYLGPPTKEREQMWQDLWLHEAIMVETWAMPLLNRINLDPYEKVEGELGDGYNALLQVHHQLGCLDILRQYTWLLSGKYTTDGIPVPIFLQKPPEENRRHVDQCIEELRMGLMCHGDMTPLLITKKRDGASGFKADMNTHYMCRNFTKLQEWTMSHGVEHWELGDGRGPHEHGRR.

A helical membrane pass occupies residues 52-72 (IVYVSLTFFVVSIGLNFILAI). 2 short sequence motifs (HXXHC) span residues 185–189 (HQLGC) and 225–229 (HVDQC). Residue N270 is glycosylated (N-linked (GlcNAc...) asparagine).

Belongs to the ustYa family.

The protein localises to the membrane. It participates in mycotoxin biosynthesis. Transacylase; part of the gene cluster that mediates the biosynthesis of the mycotoxin cyclochlorotine, a hepatotoxic and carcinogenic cyclic chlorinated pentapeptide. Within the pathway, cctO catalyzes the intramolecular O,N-transacylation from isocyclochlorotine to cyclochlorotine. The NRPS cctN initially catalyzes the condensation of L-serine (Ser), Pro, L-2-aminobutyrate (2Abu), Ser, and beta-Phe in this order to produce isocyclotine. After the dichlorination of Pro2 catalyzed by cctP2 to produce isocyclochlorotine, the cctO-mediated transacylation of isocyclochlorotine can furnish cyclochlorotine. The subsequent hydroxylation of cyclochlorotine by cctR yields hydroxycyclochlorotine as the final product. CctP1 probably acts as a phenylalanine aminomutase and provides the uncommon building block beta-Phe. Furthermore, 2Abu can be synthesized from threonine by one of the threonine dehydratases and transaminases localized outside of the cluster. The functions of the remaining proteins encoded by the cluster, cctM and cctT, have not been identified yet. This is Transacylase cctO from Talaromyces islandicus (Penicillium islandicum).